We begin with the raw amino-acid sequence, 240 residues long: Phosphoribosylaminoimidazole-succinocarboxamide synthase (240 aa).

It belongs to the SAICAR synthetase family.

The enzyme catalyses 5-amino-1-(5-phospho-D-ribosyl)imidazole-4-carboxylate + L-aspartate + ATP = (2S)-2-[5-amino-1-(5-phospho-beta-D-ribosyl)imidazole-4-carboxamido]succinate + ADP + phosphate + 2 H(+). Its pathway is purine metabolism; IMP biosynthesis via de novo pathway; 5-amino-1-(5-phospho-D-ribosyl)imidazole-4-carboxamide from 5-amino-1-(5-phospho-D-ribosyl)imidazole-4-carboxylate: step 1/2. This Pyrobaculum calidifontis (strain DSM 21063 / JCM 11548 / VA1) protein is Phosphoribosylaminoimidazole-succinocarboxamide synthase.